A 209-amino-acid polypeptide reads, in one-letter code: Imidazole glycerol phosphate synthase subunit HisH (209 aa).

Positions 1-205 constitute a Glutamine amidotransferase type-1 domain; that stretch reads MIAIIDYGMG…KGVVETWKSS (205 aa). C79 (nucleophile) is an active-site residue. Catalysis depends on residues H180 and E182.

Heterodimer of HisH and HisF.

It localises to the cytoplasm. It carries out the reaction 5-[(5-phospho-1-deoxy-D-ribulos-1-ylimino)methylamino]-1-(5-phospho-beta-D-ribosyl)imidazole-4-carboxamide + L-glutamine = D-erythro-1-(imidazol-4-yl)glycerol 3-phosphate + 5-amino-1-(5-phospho-beta-D-ribosyl)imidazole-4-carboxamide + L-glutamate + H(+). The enzyme catalyses L-glutamine + H2O = L-glutamate + NH4(+). The protein operates within amino-acid biosynthesis; L-histidine biosynthesis; L-histidine from 5-phospho-alpha-D-ribose 1-diphosphate: step 5/9. Functionally, IGPS catalyzes the conversion of PRFAR and glutamine to IGP, AICAR and glutamate. The HisH subunit catalyzes the hydrolysis of glutamine to glutamate and ammonia as part of the synthesis of IGP and AICAR. The resulting ammonia molecule is channeled to the active site of HisF. The sequence is that of Imidazole glycerol phosphate synthase subunit HisH from Bacillus cereus (strain AH187).